We begin with the raw amino-acid sequence, 431 residues long: Putative serine/threonine-protein kinase B (431 aa).

Residues 20–279 (YLNKGIVGLG…VRENFQIPYI (260 aa)) form the Protein kinase domain. Residues 26-34 (VGLGSYGEG) and lysine 49 each bind ATP. Aspartate 147 functions as the Proton acceptor in the catalytic mechanism. One can recognise a PH domain in the interval 331-429 (DVTHRGHVNK…WVHAIQRGIG (99 aa)).

Belongs to the protein kinase superfamily. Ser/Thr protein kinase family.

The enzyme catalyses L-seryl-[protein] + ATP = O-phospho-L-seryl-[protein] + ADP + H(+). It catalyses the reaction L-threonyl-[protein] + ATP = O-phospho-L-threonyl-[protein] + ADP + H(+). The protein is Putative serine/threonine-protein kinase B (NRKB) of Trypanosoma brucei brucei.